We begin with the raw amino-acid sequence, 169 residues long: Crossover junction endodeoxyribonuclease RuvC (169 aa).

Active-site residues include Asp-15, Glu-75, and Asp-147. Mg(2+)-binding residues include Asp-15, Glu-75, and Asp-147.

It belongs to the RuvC family. As to quaternary structure, homodimer which binds Holliday junction (HJ) DNA. The HJ becomes 2-fold symmetrical on binding to RuvC with unstacked arms; it has a different conformation from HJ DNA in complex with RuvA. In the full resolvosome a probable DNA-RuvA(4)-RuvB(12)-RuvC(2) complex forms which resolves the HJ. Mg(2+) serves as cofactor.

Its subcellular location is the cytoplasm. The enzyme catalyses Endonucleolytic cleavage at a junction such as a reciprocal single-stranded crossover between two homologous DNA duplexes (Holliday junction).. The RuvA-RuvB-RuvC complex processes Holliday junction (HJ) DNA during genetic recombination and DNA repair. Endonuclease that resolves HJ intermediates. Cleaves cruciform DNA by making single-stranded nicks across the HJ at symmetrical positions within the homologous arms, yielding a 5'-phosphate and a 3'-hydroxyl group; requires a central core of homology in the junction. The consensus cleavage sequence is 5'-(A/T)TT(C/G)-3'. Cleavage occurs on the 3'-side of the TT dinucleotide at the point of strand exchange. HJ branch migration catalyzed by RuvA-RuvB allows RuvC to scan DNA until it finds its consensus sequence, where it cleaves and resolves the cruciform DNA. The protein is Crossover junction endodeoxyribonuclease RuvC of Caulobacter vibrioides (strain ATCC 19089 / CIP 103742 / CB 15) (Caulobacter crescentus).